Consider the following 1291-residue polypeptide: Cytoplasmic FMR1-interacting protein (1291 aa).

The disordered stretch occupies residues 1269–1291 (HPSVISSSSHYQDPQKLRQSMNN). Positions 1271-1291 (SVISSSSHYQDPQKLRQSMNN) are enriched in polar residues.

Belongs to the CYFIP family. Interacts with Fmr1 and Rac1. Component of the WAVE complex composed of Hem/Kette, Scar/Wave and Cyfip where it binds through its C-terminus directly to Hem.

The protein localises to the cytoplasm. Functionally, plays a role in guidance and morphology of central and peripheral axons and in synaptic morphology. Also required for formation of cell membrane protrusions and for bristle development. This is Cytoplasmic FMR1-interacting protein from Drosophila pseudoobscura pseudoobscura (Fruit fly).